The following is a 407-amino-acid chain: Serine/threonine transporter SstT (407 aa).

A run of 9 helical transmembrane segments spans residues 14–34, 48–68, 82–102, 141–161, 192–212, 216–236, 290–310, 316–336, and 363–383; these read GSLV…ATVS, FVGA…AASI, IVIL…LMSF, AVLT…GLAL, IGIF…AIAG, LLLV…PAIV, IPLG…ILTL, MGIQ…GVSA, and VAMQ…SAET.

The protein belongs to the dicarboxylate/amino acid:cation symporter (DAACS) (TC 2.A.23) family.

It localises to the cell inner membrane. The enzyme catalyses L-serine(in) + Na(+)(in) = L-serine(out) + Na(+)(out). It catalyses the reaction L-threonine(in) + Na(+)(in) = L-threonine(out) + Na(+)(out). Involved in the import of serine and threonine into the cell, with the concomitant import of sodium (symport system). The polypeptide is Serine/threonine transporter SstT (Shewanella halifaxensis (strain HAW-EB4)).